The primary structure comprises 784 residues: Ribosome biogenesis protein BOP1 homolog (784 aa).

The span at 1-11 (MTKKLALKRKG) shows a compositional bias: basic residues. Residues 1–159 (MTKKLALKRK…DSDTSDEEDI (159 aa)) form a disordered region. Acidic residues-rich tracts occupy residues 27 to 36 (SENEEEEEDL), 45 to 54 (EDSTDDEGID), 62 to 73 (SEELQFESDEEG), and 84 to 111 (AEED…EDEE). Over residues 112–123 (KDSKSKQADDKP) the composition is skewed to basic and acidic residues. The span at 124-133 (SSSGAASKKA) shows a compositional bias: low complexity. Residues 138-148 (LSKRDTSKPEY) are compositionally biased toward basic and acidic residues. A compositionally biased stretch (acidic residues) spans 149-158 (QDSDTSDEED). WD repeat units lie at residues 445–486 (GHTD…RTIE), 488–526 (DEVV…KVLV), 570–612 (THFK…SQIP), 615–653 (KSKG…LVKK), 656–695 (TNSK…KPYQ), 699–738 (LHRN…DLLQ), and 754–784 (RDEF…RLYT).

This sequence belongs to the WD repeat BOP1/ERB1 family.

The protein resides in the nucleus. The protein localises to the nucleolus. It is found in the nucleoplasm. In terms of biological role, required for maturation of ribosomal RNAs and formation of the large ribosomal subunit. The protein is Ribosome biogenesis protein BOP1 homolog of Drosophila yakuba (Fruit fly).